The chain runs to 569 residues: Probable protein phosphatase 2C BIPP2C1 (569 aa).

2 disordered regions span residues 166 to 212 and 251 to 279; these read GSSN…SSKV and SLDD…GSSI. Low complexity predominate over residues 174–183; the sequence is SEVGVESECG. The PPM-type phosphatase domain maps to 329–564; that stretch reads AAMLPHPSKV…DDVTVVVSVV (236 aa). Mn(2+) is bound by residues Asp-358, Gly-359, Asp-488, and Asp-555.

Belongs to the PP2C family. It depends on Mg(2+) as a cofactor. Requires Mn(2+) as cofactor.

The enzyme catalyses O-phospho-L-seryl-[protein] + H2O = L-seryl-[protein] + phosphate. The catalysed reaction is O-phospho-L-threonyl-[protein] + H2O = L-threonyl-[protein] + phosphate. In terms of biological role, may play a role in responses to biotic and abiotic stresses. The polypeptide is Probable protein phosphatase 2C BIPP2C1 (BIPP2C1) (Oryza sativa subsp. indica (Rice)).